The sequence spans 186 residues: Elongation factor P (186 aa).

Belongs to the elongation factor P family.

It localises to the cytoplasm. It functions in the pathway protein biosynthesis; polypeptide chain elongation. Functionally, involved in peptide bond synthesis. Stimulates efficient translation and peptide-bond synthesis on native or reconstituted 70S ribosomes in vitro. Probably functions indirectly by altering the affinity of the ribosome for aminoacyl-tRNA, thus increasing their reactivity as acceptors for peptidyl transferase. This Shewanella sp. (strain ANA-3) protein is Elongation factor P.